Consider the following 479-residue polypeptide: Endosomal/lysosomal proton channel TMEM175 (479 aa).

The interval 1–26 (MSGPQAPEPTLEGQADASAGSPDEDA) is disordered. Residues 1–33 (MSGPQAPEPTLEGQADASAGSPDEDAAEGIQHS) are Cytoplasmic-facing. The chain crosses the membrane as a helical span at residues 34-56 (HRMLSFSDALLSIIATVMEFDKS). A RxxxFSD motif 1 motif is present at residues 35–41 (RMLSFSD). The short helix H2-1 stretch occupies residues 52-58 (EFDKSVQ). Residues 57-64 (VQRLLATR) are Lumenal-facing. A helical membrane pass occupies residues 65–87 (IAVYLMTFLIVTVAWAAHTRLFQ). Topologically, residues 88–93 (VVGKID) are cytoplasmic. Residues 94–103 (DTLALLNLFS) form a helical membrane-spanning segment. Over 104-113 (LMVTFPEVPL) the chain is Lumenal. A helical membrane pass occupies residues 114-135 (GIFLFCMCVIAIGAVQALIVLY). Residues 136–159 (AFHFPHLLSPQIERSAHRGLYRQR) are Cytoplasmic-facing. A helical membrane pass occupies residues 160–180 (VLGIIVRGPALCLAAAGFSLF). Over 181-185 (FYPAS) the chain is Lumenal. A helical membrane pass occupies residues 186–205 (YLLMAMVIVLPHVSKAAGWC). Residues 206–232 (RAQLVGPREPPAHSVEVFTFDLHEPLS) are Cytoplasmic-facing. The chain crosses the membrane as a helical span at residues 233–257 (KERVEAFSDGVYAIVATLLILDICE). The short motif at 235–241 (RVEAFSD) is the RxxxFSD motif 2 element. Residues 258-284 (DNVPDAKDVKEKFQGSLVAALGESGPH) lie on the Lumenal side of the membrane. The tract at residues 263–271 (AKDVKEKFQ) is short helix H1-2. Positions 273–279 (SLVAALG) are short helix H2-2. Residues 285 to 307 (FLAYFGSFATVGLLWFAHHSLFL) form a helical membrane-spanning segment. Residues 308-313 (HIRRAT) lie on the Cytoplasmic side of the membrane. A helical transmembrane segment spans residues 314-335 (QPMGLLNTLSLAFVGGLPLAYQ). At 336-350 (QTSAFTKQPRDELES) the chain is on the lumenal side. A helical transmembrane segment spans residues 351–371 (VRISCAIIFLASIFQFAIWTT). The Cytoplasmic portion of the chain corresponds to 372–391 (ALLQEGETLQPSARFGGREH). A helical transmembrane segment spans residues 392 to 415 (AFMFAKLALYPCASLLAFACTCVL). Over 416-417 (SS) the chain is Lumenal. Residues 418–444 (FSTAIFHAMQIAVPFAFLLLRLLVRLA) traverse the membrane as a helical segment. The Cytoplasmic segment spans residues 445–479 (LAGLRALRGLVGPVLARPAPGAADEAQSPLLPAPC).

The protein belongs to the TMEM175 family. Homodimer. Interacts with AKT (AKT1, AKT2 or AKT3); leading to formation of the lysoK(GF) complex, which activates the channel. Interacts with LAMP1; inhibiting the proton channel activity of TMEM175. Interacts with LAMP2; inhibiting the proton channel activity of TMEM175.

It is found in the endosome membrane. The protein localises to the lysosome membrane. The catalysed reaction is H(+)(in) = H(+)(out). It catalyses the reaction K(+)(in) = K(+)(out). With respect to regulation, active at low pH (under pH 4.6): proton channel activity is activated by luminal side protons. Polyunsaturated fatty acids, such as arachidonic acid, also activate the channel activity. Proton channel activity is directly inhibited by LAMP1 or LAMP2, facilitating lysosomal acidification. Channel activity is activated following interaction with AKT (AKT1, AKT2 or AKT3): interaction promotes activation from closed to an open state. Activation by AKT is independent of AKT serine/threonine-protein kinase activity. Proton-activated proton channel that catalyzes proton efflux from endosomes and lysosomes to maintain a steady-state pH. Activated at low pH (under pH 4.6) by luminal side protons: selectively mediates lysosomal proton release from lysosomes, eliciting a proton leak that balances V-ATPase activity to maintain pH homeostasis. Regulation of lumenal pH stability is required for autophagosome-lysosome fusion. Also acts as a potassium channel at higher pH, regulating potassium conductance in endosomes and lysosomes. Constitutes the pore-forming subunit of the lysoK(GF) complex, a complex activated by extracellular growth factors. The lysoK(GF) complex is composed of TMEM175 and AKT (AKT1, AKT2 or AKT3), a major target of growth factor receptors: in the complex, TMEM175 channel is opened by conformational changes by AKT, leading to its activation. The lysoK(GF) complex is required to protect neurons against stress-induced damage. The protein is Endosomal/lysosomal proton channel TMEM175 of Bos taurus (Bovine).